A 687-amino-acid polypeptide reads, in one-letter code: MTAHAAALAAADAPAPVDRSPGALGWPVTAALRALAMDGVEQAKSGHPGAPMGMAEIAAVLWREHLRHNPADPSWPDRDRFVLSNGHGSMLIYALLHLTGYDLPIAELKRFRQLHSRTPGHPELGMTPGVETTTGPLGQGLANAVGMAIAEKTLAAQFNRPGLSIVDHRTFVFLGDGCLMEGVSHEACSLAGRLGLGKLVAFYDDNGISIDGKVEEWFPDDTPARFAAYGWHVIRNVDGHDPAMLRDAVEAALSETGKPTLICCKTTIGRGAPTKEGHQDTHGAPLGAEEIARTRAAMGWDHAPFEVPEDIYALWDARRSGAARQSAWDARMEAYERAYPAEAAEFRRRLKGDLSPAFAATYAAALKATVEKAETVATRKASQLALAALAPAVPEFLGGSADLAHSNLTTFPGAVPITRDPAGNQIFYGVREFGMSAIANGIALHGGFIPFVATFLVFSDYARNAMRMSALMGQRVIYILTHDSIGLGEDGPTHQPVEHVESLRLIPNLDVWRPADTVETLAAWHAALTRTNGPSAFILSRQNLPCWPRDAAQIEGIEAGAYVLRESEGLARAVLVATGSEVKLAAAAADLLDTAGIPTRIVSMPCRERFEALTETERAALFPKGVPVVAVEAGVTRGWRGLSGTRADGIIAIGIDRFGESAPEKDLWPLFGFTPEAVADAVRRAVG.

A substrate-binding site is contributed by His47. Residues His87 and Gly135–Leu137 contribute to the thiamine diphosphate site. Asp176 serves as a coordination point for Mg(2+). The thiamine diphosphate site is built by Gly177 and Asn206. The Mg(2+) site is built by Asn206 and Ile208. Residues His282, Arg379, and Ser406 each contribute to the substrate site. A thiamine diphosphate-binding site is contributed by His282. Glu432 functions as the Proton donor in the catalytic mechanism. Phe458 is a binding site for thiamine diphosphate. Residues His482, Asp490, His494, and Arg541 each coordinate substrate.

The protein belongs to the transketolase family. It depends on Mg(2+) as a cofactor. Requires thiamine diphosphate as cofactor.

The catalysed reaction is D-sedoheptulose 7-phosphate + D-glyceraldehyde 3-phosphate = aldehydo-D-ribose 5-phosphate + D-xylulose 5-phosphate. With respect to regulation, activity is increased sixfold following autotrophic growth on methanol compared with that of heterotrophically grown cells. In terms of biological role, catalyzes the transfer of a two-carbon ketol group from a ketose donor to an aldose acceptor, via a covalent intermediate with the cofactor thiamine pyrophosphate. In Xanthobacter flavus, this protein is Transketolase 2.